The primary structure comprises 885 residues: Rho GTPase-activating protein gacFF (885 aa).

Low complexity predominate over residues 168–182 (TTTNNSNNSNSNNNN). The disordered stretch occupies residues 168–187 (TTTNNSNNSNSNNNNKQYNS). A coiled-coil region spans residues 222-249 (LINKIQNDSEQLKLVLSQVEQQIEFLKS). The region spanning 348–394 (SDIFSLLPTHLTLYVFSYLEPKELLILAQVSSQWQKLAGDNLLWVRF) is the F-box domain. One can recognise a PH domain in the interval 464–571 (SSSKEGWLYK…WMILLNSIIK (108 aa)). Composition is skewed to low complexity over residues 594-622 (NNVY…NNNN) and 629-648 (LPPL…SSTG). The segment at 594 to 680 (NNVYINNNNN…GGGSGGNNNF (87 aa)) is disordered. The Rho-GAP domain occupies 701 to 885 (VALSKILENQ…KYYDEIFIKK (185 aa)).

It localises to the cytoplasm. Functionally, rho GTPase-activating protein involved in the signal transduction pathway. In Dictyostelium discoideum (Social amoeba), this protein is Rho GTPase-activating protein gacFF (gacFF).